Here is a 187-residue protein sequence, read N- to C-terminus: Large ribosomal subunit protein mL49 (187 aa).

It belongs to the mitochondrion-specific ribosomal protein mL49 family.

It localises to the mitochondrion. The chain is Large ribosomal subunit protein mL49 (mrpl-49) from Caenorhabditis elegans.